The sequence spans 275 residues: MTKDRIDRRFAALKAENRAGFVTYIMAGDPDAATTLSVLKGLPAAGADLIELGFPFSDPMAEGPTIQRAAQRGLKSGMTLQGTLDLVAGFREGDADTPIILMGYLNPVLNRGFESFAAAAAKAGVDGLIIVDCPPEEAGPLTDALEAEGIALIRLAAPTTDDKRLPMVVRRTSGFVYYVSVAGVTGVKSADAADVAPAVARLRKASGLPVAVGFGIRTPAQAAAVARVADAAVVGSALVDEIEAAAQLNENVTEKVLLKASELAKAVRSARLELA.

Catalysis depends on proton acceptor residues Glu51 and Glu62.

It belongs to the TrpA family. As to quaternary structure, tetramer of two alpha and two beta chains.

The catalysed reaction is (1S,2R)-1-C-(indol-3-yl)glycerol 3-phosphate + L-serine = D-glyceraldehyde 3-phosphate + L-tryptophan + H2O. It functions in the pathway amino-acid biosynthesis; L-tryptophan biosynthesis; L-tryptophan from chorismate: step 5/5. Functionally, the alpha subunit is responsible for the aldol cleavage of indoleglycerol phosphate to indole and glyceraldehyde 3-phosphate. In Caulobacter sp. (strain K31), this protein is Tryptophan synthase alpha chain.